A 201-amino-acid chain; its full sequence is MKVVAFERQEQGTGASRRLRNAGKTTGIVYGGEAAPQKIELDHNALWHALKKEAFHSSILDLEVAGQSQQVLLRDVQYHPFKQLVLHVDFQRVDAKKKLHTKAPLHFLNAEISPAVKLSSAIVSHVATEIEIECLPADLPEFLEVDLSKIEAGQSLHAKDITLPKGVVLVAHVDAENPVVASATVPAGAVSDAAEGETPAA.

This sequence belongs to the bacterial ribosomal protein bL25 family. CTC subfamily. In terms of assembly, part of the 50S ribosomal subunit; part of the 5S rRNA/L5/L18/L25 subcomplex. Contacts the 5S rRNA. Binds to the 5S rRNA independently of L5 and L18.

Functionally, this is one of the proteins that binds to the 5S RNA in the ribosome where it forms part of the central protuberance. The chain is Large ribosomal subunit protein bL25 from Burkholderia lata (strain ATCC 17760 / DSM 23089 / LMG 22485 / NCIMB 9086 / R18194 / 383).